The chain runs to 166 residues: ATP synthase subunit b (166 aa).

The chain crosses the membrane as a helical span at residues 7–27; sequence QFSLGLFILQIILFVGLILLL.

Belongs to the ATPase B chain family. F-type ATPases have 2 components, F(1) - the catalytic core - and F(0) - the membrane proton channel. F(1) has five subunits: alpha(3), beta(3), gamma(1), delta(1), epsilon(1). F(0) has three main subunits: a(1), b(2) and c(10-14). The alpha and beta chains form an alternating ring which encloses part of the gamma chain. F(1) is attached to F(0) by a central stalk formed by the gamma and epsilon chains, while a peripheral stalk is formed by the delta and b chains.

Its subcellular location is the cell inner membrane. Its function is as follows. F(1)F(0) ATP synthase produces ATP from ADP in the presence of a proton or sodium gradient. F-type ATPases consist of two structural domains, F(1) containing the extramembraneous catalytic core and F(0) containing the membrane proton channel, linked together by a central stalk and a peripheral stalk. During catalysis, ATP synthesis in the catalytic domain of F(1) is coupled via a rotary mechanism of the central stalk subunits to proton translocation. Component of the F(0) channel, it forms part of the peripheral stalk, linking F(1) to F(0). The chain is ATP synthase subunit b from Flavobacterium psychrophilum (strain ATCC 49511 / DSM 21280 / CIP 103535 / JIP02/86).